The sequence spans 252 residues: 3-dehydroquinate dehydratase (252 aa).

Residues S21, 46–48 (EWR), and R82 contribute to the 3-dehydroquinate site. Residue H143 is the Proton donor/acceptor of the active site. Residue K170 is the Schiff-base intermediate with substrate of the active site. R213, S232, and Q236 together coordinate 3-dehydroquinate.

It belongs to the type-I 3-dehydroquinase family. As to quaternary structure, homodimer.

It catalyses the reaction 3-dehydroquinate = 3-dehydroshikimate + H2O. Its pathway is metabolic intermediate biosynthesis; chorismate biosynthesis; chorismate from D-erythrose 4-phosphate and phosphoenolpyruvate: step 3/7. Its function is as follows. Involved in the third step of the chorismate pathway, which leads to the biosynthesis of aromatic amino acids. Catalyzes the cis-dehydration of 3-dehydroquinate (DHQ) and introduces the first double bond of the aromatic ring to yield 3-dehydroshikimate. The protein is 3-dehydroquinate dehydratase of Shigella flexneri serotype 5b (strain 8401).